A 143-amino-acid chain; its full sequence is Large ribosomal subunit protein uL11 (143 aa).

Belongs to the universal ribosomal protein uL11 family. Part of the ribosomal stalk of the 50S ribosomal subunit. Interacts with L10 and the large rRNA to form the base of the stalk. L10 forms an elongated spine to which L12 dimers bind in a sequential fashion forming a multimeric L10(L12)X complex. One or more lysine residues are methylated.

Its function is as follows. Forms part of the ribosomal stalk which helps the ribosome interact with GTP-bound translation factors. The protein is Large ribosomal subunit protein uL11 of Pseudomonas fluorescens (strain SBW25).